A 620-amino-acid chain; its full sequence is uncharacterized protein (620 aa).

The next 4 helical transmembrane spans lie at 66–86 (LLNF…NQII), 238–258 (FFDA…NLLW), 546–566 (LGII…VWTI), and 584–604 (IIFI…ILVF).

The protein localises to the cell membrane. This is an uncharacterized protein from Mycoplasma genitalium (strain ATCC 33530 / DSM 19775 / NCTC 10195 / G37) (Mycoplasmoides genitalium).